Consider the following 242-residue polypeptide: Protein HTATIP2 (242 aa).

At Ala2 the chain carries N-acetylalanine. The tract at residues Ala2–Gly25 is required for interaction with elongation factor EEF1A1. The NADPH site is built by Ser27, Gly28, Glu29, Thr30, Arg52, Arg53, Leu92, Gly93, Tyr143, Lys147, Leu170, and Arg178. The Proton acceptor role is filled by Tyr143. The active site involves Lys147.

Monomer. Forms homodimers during oxidative stress. Interacts (via N-terminus) with elongation factor EEF1A1 (via middle-region); the interaction is direct and competes with EEF1A1 binding to guanyl-nucleotide exchange factor EEF1B2, thereby inhibiting GDP for GTP exchange and reactivation of EEF1A1. Interacts with nuclear transport receptors XPO4, IPO5/RANBP5, IPO7, IPO9 and KPNB1 as well as GCN1L1/GCN1 and LRPPRC probably through their HEAT repeats. Binds NCOA5/CIA.

In terms of biological role, represses translation by preventing reactivation of elongation factor eEF1A. May also inhibit nuclear import by competing with nuclear import substrates for binding to a subset of nuclear transport receptors. Has additionally been proposed to act as a redox sensor involved in cellular oxidative stress surveillance. May bind NADPH. The protein is Protein HTATIP2 of Rattus norvegicus (Rat).